A 651-amino-acid polypeptide reads, in one-letter code: MLSVPHLDREFDYLVSAEQSDDAQPGVRVRVRFHGRLVDGFVLERRNDTEHFGKLGWLDRVVSAQPVLTAEVRRLVDAVVARYAGTRPDVLRLAVPTRHARVERETLAIPVSPLPLIPGPVDPSGWEVYGRGGQFLTALAESRAARAVWQALPGEQWADRFAEAAAQAIRAGRAALAIVPDQRDLDVLWRAVTTRVDERSVVALSAGLGQAVRYQRWLKVLRGSARLVIGTRSAVFAPVNDLGLVMVWSDADDMLAEPRAPYPHAREVAMLRAYQARCAALIGGYTRTAEAHALVRSGWAHDVVAARSVVRARAPRVVALDDSGYAEESDPAARTARLPSIALRAARSALAAGAPVLVQVPRRGYVPSLACGRCRTLARCRHCTGPLSLLDRATPGTVCCWCGRADLTLRCARCGSEVVRAVVVGARRTAEELGRAFAGMPVITSVGDTIVPEVGARPALVVATPGAEPRAPGGYGAALLLDTWALLGRQDLRAAEEALWRWMTAAALVRARGDGGVVMVVAEASIPTVQSLMRWDPASHAEAELAARTEVGLPPSVHIAAVDGTTGAVNELLQEARLPDEADLLGPVDLPQGVRRPAGTPLGAPISRLLVRVPREQGWQLAASLRRGIGVLSVRQTHQLVRVQIDPLHIG.

C371, C374, C380, C383, C399, C402, C411, and C414 together coordinate Zn(2+).

The protein belongs to the helicase family. PriA subfamily. Component of the replication restart primosome. The cofactor is Zn(2+).

Its function is as follows. Initiates the restart of stalled replication forks, which reloads the replicative helicase on sites other than the origin of replication. Recognizes and binds to abandoned replication forks and remodels them to uncover a helicase loading site. Promotes assembly of the primosome at these replication forks. The polypeptide is Probable replication restart protein PriA (Mycobacterium leprae (strain TN)).